The chain runs to 92 residues: Putative pterin-4-alpha-carbinolamine dehydratase (92 aa).

Belongs to the pterin-4-alpha-carbinolamine dehydratase family.

The enzyme catalyses (4aS,6R)-4a-hydroxy-L-erythro-5,6,7,8-tetrahydrobiopterin = (6R)-L-erythro-6,7-dihydrobiopterin + H2O. The chain is Putative pterin-4-alpha-carbinolamine dehydratase from Haloarcula marismortui (strain ATCC 43049 / DSM 3752 / JCM 8966 / VKM B-1809) (Halobacterium marismortui).